The following is a 57-amino-acid chain: Protein Ric1 (57 aa).

Helical transmembrane passes span 8-28 (IPRL…QVGC) and 34-54 (INCL…VYIL).

Belongs to the UPF0057 (PMP3) family.

The protein localises to the membrane. This chain is Protein Ric1 (RIC1), found in Phytophthora infestans (Potato late blight agent).